We begin with the raw amino-acid sequence, 233 residues long: Homeobox protein Hox-D4a (233 aa).

The Antp-type hexapeptide signature appears at 124–129 (VYPWMK). A DNA-binding region (homeobox) is located at residues 145–204 (PKRSRTAYTRQQVLELEKEFHFNRYLTRRRRIEIAHTLCLSERQIKIWFQNRRMKWTKDH). Residues 203-233 (DHKLPNTKGRSAPASSHLQSIHKDQTDITSL) form a disordered region. Positions 223-233 (IHKDQTDITSL) are enriched in basic and acidic residues.

This sequence belongs to the Antp homeobox family. Deformed subfamily.

Its subcellular location is the nucleus. Sequence-specific transcription factor which is part of a developmental regulatory system that provides cells with specific positional identities on the anterior-posterior axis. The chain is Homeobox protein Hox-D4a (hoxd4a) from Takifugu rubripes (Japanese pufferfish).